Consider the following 498-residue polypeptide: MRINPTTSSPGVSTLEEKNLGRIVQIIGPVLDVAFPPGKMPNIYNALVVKGRDTVGQQINVTCEVQQLLGNNRVRAVAMSATDGLMRGMEVIDTGAPLSVPVGGATLGRIFNVLGEPVDNLGPVDTRTTSPIHRSAPAFIQLDTKLSIFETGIKVVDLLAPYRRGGKIGLFGGAGVGKTVLIMELINNIAKAHGGVSVFGGVGERTREGNDLYMEMKESGVINEQNIAESKVALVYGQMNEPPGARMRVGLTALTMAEYFRDVNEQDVLLFIDNIFRFVQAGSEVSALLGRMPSAVGYQPTLSTEMGSLQERITSTKEGSITSIQAVYVPADDLTDPAPATTFAHLDATTVLSRGLAAKGIYPAVDPLDSTSTMLQPRIVGEEHYETAQRVKQTSQRYKELQDIIAILGLDELSEEDRLTVARARKIERFLSQPFFVAEVFTGSPGKYVGLAETIRGFQLILSGELDGLPEQAFYLVGNIDEATAKAMNLEVESKLKK.

172–179 lines the ATP pocket; that stretch reads GGAGVGKT.

The protein belongs to the ATPase alpha/beta chains family. As to quaternary structure, F-type ATPases have 2 components, CF(1) - the catalytic core - and CF(0) - the membrane proton channel. CF(1) has five subunits: alpha(3), beta(3), gamma(1), delta(1), epsilon(1). CF(0) has four main subunits: a(1), b(1), b'(1) and c(9-12).

It localises to the plastid. The protein localises to the chloroplast thylakoid membrane. It catalyses the reaction ATP + H2O + 4 H(+)(in) = ADP + phosphate + 5 H(+)(out). Produces ATP from ADP in the presence of a proton gradient across the membrane. The catalytic sites are hosted primarily by the beta subunits. This is ATP synthase subunit beta, chloroplastic from Liriodendron tulipifera (Tuliptree).